The sequence spans 877 residues: Putative ankyrin repeat protein R748 (877 aa).

6 ANK repeats span residues 44-74 (IRHICLTGSYNNNQMSIMKILMNKFPKTINV), 79-109 (QNNTYLHQSIFNRHKIFVDFFMNELNDNINY), 115-145 (IGISHLHALVNYGYIDHIETAIIKDPGAIQQ), 202-231 (MGYRAIECAVRYCSTDVIDELISLGFSINE), 243-272 (NNNDLIGFATQIDRLDMVKHLINIGAPIHM), and 282-311 (LVPTCLVVAIKFKRDQCIHYLLNLPESIQA). Residues 525 to 579 (DSDEDPVCDSNESDNSNDINNHVKSDNKLNSSNDYYDEDDSEDNYNNQSDDEPLV) are disordered. Low complexity predominate over residues 533-544 (DSNESDNSNDIN).

This chain is Putative ankyrin repeat protein R748, found in Acanthamoeba polyphaga mimivirus (APMV).